Here is a 276-residue protein sequence, read N- to C-terminus: Proteasome chaperone 1 (276 aa).

Belongs to the PSMG1 family. In terms of assembly, component of the 20S proteasome chaperone. Forms a heterodimer with ADD66 that binds to proteasome precursors.

Its subcellular location is the cytoplasm. Functionally, involved in 20S proteasome assembly. This Saccharomyces cerevisiae (strain ATCC 204508 / S288c) (Baker's yeast) protein is Proteasome chaperone 1 (PBA1).